The primary structure comprises 130 residues: Large ribosomal subunit protein bL19 (130 aa).

This sequence belongs to the bacterial ribosomal protein bL19 family.

In terms of biological role, this protein is located at the 30S-50S ribosomal subunit interface and may play a role in the structure and function of the aminoacyl-tRNA binding site. The sequence is that of Large ribosomal subunit protein bL19 from Mycoplasma capricolum subsp. capricolum (strain California kid / ATCC 27343 / NCTC 10154).